We begin with the raw amino-acid sequence, 283 residues long: Polyamine aminopropyltransferase (283 aa).

Residues 2 to 237 (ELWYTEEHTD…GHWLFGFASK (236 aa)) form the PABS domain. Gln-31 lines the S-methyl-5'-thioadenosine pocket. Spermidine-binding residues include His-62 and Asp-86. S-methyl-5'-thioadenosine is bound by residues Glu-106 and 137 to 138 (DG). Asp-155 (proton acceptor) is an active-site residue. Residue 155–158 (DSTD) participates in spermidine binding. Pro-162 serves as a coordination point for S-methyl-5'-thioadenosine.

Belongs to the spermidine/spermine synthase family. As to quaternary structure, homodimer or homotetramer.

The protein localises to the cytoplasm. It catalyses the reaction S-adenosyl 3-(methylsulfanyl)propylamine + putrescine = S-methyl-5'-thioadenosine + spermidine + H(+). Its pathway is amine and polyamine biosynthesis; spermidine biosynthesis; spermidine from putrescine: step 1/1. Catalyzes the irreversible transfer of a propylamine group from the amino donor S-adenosylmethioninamine (decarboxy-AdoMet) to putrescine (1,4-diaminobutane) to yield spermidine. The sequence is that of Polyamine aminopropyltransferase from Clostridium perfringens (strain 13 / Type A).